We begin with the raw amino-acid sequence, 624 residues long: Ubiquitin carboxyl-terminal hydrolase 16 (624 aa).

A USP domain is found at 46-620 (VGLSNPANDC…EVYLLFYEIE (575 aa)). The active-site Nucleophile is the Cys55. His424 functions as the Proton acceptor in the catalytic mechanism. A disordered region spans residues 453–573 (SENPSRVASP…ATDTEASASA (121 aa)). The segment covering 479–496 (SPPASTSTNSPLSLTPDS) has biased composition (low complexity). Residues 518–544 (VSFQSTHSSSKQTISPTSAARNSSSLD) show a composition bias toward polar residues. Residues 546–573 (ARLSSPASRSSLAERNASATDTEASASA) show a composition bias toward low complexity.

Belongs to the peptidase C19 family.

The catalysed reaction is Thiol-dependent hydrolysis of ester, thioester, amide, peptide and isopeptide bonds formed by the C-terminal Gly of ubiquitin (a 76-residue protein attached to proteins as an intracellular targeting signal).. This chain is Ubiquitin carboxyl-terminal hydrolase 16 (ubp16), found in Emericella nidulans (strain FGSC A4 / ATCC 38163 / CBS 112.46 / NRRL 194 / M139) (Aspergillus nidulans).